A 199-amino-acid polypeptide reads, in one-letter code: UPF0637 protein LVIS_1261 (199 aa).

Belongs to the UPF0637 family.

The polypeptide is UPF0637 protein LVIS_1261 (Levilactobacillus brevis (strain ATCC 367 / BCRC 12310 / CIP 105137 / JCM 1170 / LMG 11437 / NCIMB 947 / NCTC 947) (Lactobacillus brevis)).